Consider the following 528-residue polypeptide: Glucose-6-phosphate isomerase (528 aa).

Glu-322 serves as the catalytic Proton donor. Residues His-351 and Lys-455 contribute to the active site.

This sequence belongs to the GPI family.

The protein localises to the cytoplasm. The enzyme catalyses alpha-D-glucose 6-phosphate = beta-D-fructose 6-phosphate. It functions in the pathway carbohydrate biosynthesis; gluconeogenesis. It participates in carbohydrate degradation; glycolysis; D-glyceraldehyde 3-phosphate and glycerone phosphate from D-glucose: step 2/4. Catalyzes the reversible isomerization of glucose-6-phosphate to fructose-6-phosphate. The protein is Glucose-6-phosphate isomerase of Synechococcus elongatus (strain ATCC 33912 / PCC 7942 / FACHB-805) (Anacystis nidulans R2).